Here is a 315-residue protein sequence, read N- to C-terminus: MTNQFSSTHFLNITENSEKQRIDNFLRKTFKRLPFNLICKIIRTGQIRINKKRINQNYKLKLGDSVRIPPITIQSDSNKKIKLNTRLSIIFNNMILYEDNYFLILNKPSGMSVHSGSGINYGMIENLRILRPYNRYLDLVHRLDRDTSGVLIIAKKRSILRNLHEQLREKKIKKKYVALVHGVWPDILKSISKPLLKTSSRKNKNIVKIDPKGKESITHFNIKKKYTKNTLISITPITGRTHQIRVHLLHLNYPIVLDAKYGIKKLDYFIKNKFNINRLLLHAESINFFHPKRKKNILITAPLDYVFKTVLKNLI.

The 71-residue stretch at 20-90 (QRIDNFLRKT…IKLNTRLSII (71 aa)) folds into the S4 RNA-binding domain. Residue aspartate 144 is part of the active site.

It belongs to the pseudouridine synthase RluA family.

The catalysed reaction is uridine(955/2504/2580) in 23S rRNA = pseudouridine(955/2504/2580) in 23S rRNA. In terms of biological role, responsible for synthesis of pseudouridine from uracil at positions 955, 2504 and 2580 in 23S ribosomal RNA. This Buchnera aphidicola subsp. Baizongia pistaciae (strain Bp) protein is Ribosomal large subunit pseudouridine synthase C (rluC).